Consider the following 535-residue polypeptide: Calcium-dependent protein kinase 7 (535 aa).

Residues 1–29 are disordered; sequence MGNCCGNPSSATNQSKQGKPKNKNNPFYS. The N-myristoyl glycine moiety is linked to residue Gly2. The Protein kinase domain maps to 59–317; sequence YDLGREVGRG…AAQVLEHTWI (259 aa). ATP is bound by residues 65–73 and Lys88; that span reads VGRGEFGIT. The active-site Proton acceptor is Asp183. Ser223 carries the post-translational modification Phosphoserine. The autoinhibitory domain stretch occupies residues 323-353; that stretch reads APNVSLGETVKARLKQFSVMNKLKKRALRVI. EF-hand domains lie at 360–395, 396–431, 432–467, and 468–504; these read EEAAGIKEAFEMMDVNKRGKINLEELKYGLQKAGQQ, IADTDLQILMEATDVDGDGTLNYSEFVAVSVHLKKM, ANDEHLHKAFNFFDQNQSGYIEIDELREALNDELDN, and TSSEEVIAAIMQDVDTDKDGRISYEEFVAMMKAGTDW. The Ca(2+) site is built by Asp373, Asn375, Lys379, Glu384, Asp409, Asp411, Asp413, Thr415, Glu420, Asp445, Asn447, Ser449, Tyr451, Glu456, Asp482, Asp484, Asp486, and Arg488. Ser490 is subject to Phosphoserine. Residue Glu493 coordinates Ca(2+).

It belongs to the protein kinase superfamily. Ser/Thr protein kinase family. CDPK subfamily.

It is found in the cell membrane. It catalyses the reaction L-seryl-[protein] + ATP = O-phospho-L-seryl-[protein] + ADP + H(+). It carries out the reaction L-threonyl-[protein] + ATP = O-phospho-L-threonyl-[protein] + ADP + H(+). With respect to regulation, activated by calcium. Autophosphorylation may play an important role in the regulation of the kinase activity. Functionally, may play a role in signal transduction pathways that involve calcium as a second messenger. This Arabidopsis thaliana (Mouse-ear cress) protein is Calcium-dependent protein kinase 7 (CPK7).